The chain runs to 464 residues: UDP-N-acetylmuramate--L-alanine ligase (464 aa).

Residue 118–124 (GTHGKTT) coordinates ATP.

The protein belongs to the MurCDEF family.

The protein resides in the cytoplasm. It carries out the reaction UDP-N-acetyl-alpha-D-muramate + L-alanine + ATP = UDP-N-acetyl-alpha-D-muramoyl-L-alanine + ADP + phosphate + H(+). It participates in cell wall biogenesis; peptidoglycan biosynthesis. Cell wall formation. The polypeptide is UDP-N-acetylmuramate--L-alanine ligase (Dinoroseobacter shibae (strain DSM 16493 / NCIMB 14021 / DFL 12)).